A 135-amino-acid chain; its full sequence is Large ribosomal subunit protein uL16m (135 aa).

The protein belongs to the universal ribosomal protein uL16 family.

The protein localises to the mitochondrion. The protein is Large ribosomal subunit protein uL16m (RPL16) of Prototheca wickerhamii.